Consider the following 689-residue polypeptide: Methionine--tRNA ligase (689 aa).

Positions 15–25 match the 'HIGH' region motif; the sequence is PYANGPIHLGH. Positions 146, 149, 159, and 162 each coordinate Zn(2+). The 'KMSKS' region motif lies at 332 to 336; it reads KMSKS. Lysine 335 lines the ATP pocket. The segment at 546–577 is disordered; the sequence is KDNLQPTEAPKADKKADKKVEKKATTGDPLTD. Over residues 555–570 the composition is skewed to basic and acidic residues; that stretch reads PKADKKADKKVEKKAT. Residues 588 to 689 enclose the tRNA-binding domain; it reads DFAKLDLRIA…QGAKPGMRVK (102 aa).

This sequence belongs to the class-I aminoacyl-tRNA synthetase family. MetG type 1 subfamily. Homodimer. Requires Zn(2+) as cofactor.

It localises to the cytoplasm. It carries out the reaction tRNA(Met) + L-methionine + ATP = L-methionyl-tRNA(Met) + AMP + diphosphate. In terms of biological role, is required not only for elongation of protein synthesis but also for the initiation of all mRNA translation through initiator tRNA(fMet) aminoacylation. This chain is Methionine--tRNA ligase, found in Shewanella denitrificans (strain OS217 / ATCC BAA-1090 / DSM 15013).